The primary structure comprises 345 residues: tRNA-dihydrouridine(20/20a) synthase (345 aa).

Residues 32–34 and Gln84 contribute to the FMN site; that span reads PML. The active-site Proton donor is the Cys114. FMN is bound by residues Lys153, His186, 226 to 228, and 248 to 249; these read NGG and GR.

It belongs to the Dus family. DusA subfamily. FMN serves as cofactor.

It carries out the reaction 5,6-dihydrouridine(20) in tRNA + NADP(+) = uridine(20) in tRNA + NADPH + H(+). The catalysed reaction is 5,6-dihydrouridine(20) in tRNA + NAD(+) = uridine(20) in tRNA + NADH + H(+). The enzyme catalyses 5,6-dihydrouridine(20a) in tRNA + NADP(+) = uridine(20a) in tRNA + NADPH + H(+). It catalyses the reaction 5,6-dihydrouridine(20a) in tRNA + NAD(+) = uridine(20a) in tRNA + NADH + H(+). Functionally, catalyzes the synthesis of 5,6-dihydrouridine (D), a modified base found in the D-loop of most tRNAs, via the reduction of the C5-C6 double bond in target uridines. Specifically modifies U20 and U20a in tRNAs. This chain is tRNA-dihydrouridine(20/20a) synthase, found in Escherichia coli O157:H7.